The primary structure comprises 454 residues: Protein pid-2 (454 aa).

Residues 31–61 are disordered; sequence VQNNQKEHPPVQEIKTVSSKSKEHRVSSSRK. Over residues 50–61 the composition is skewed to basic and acidic residues; the sequence is KSKEHRVSSSRK.

May interact with pid-4, pid-5, app-1 and prmt-5. In terms of tissue distribution, expressed throughout the mitotic and meiotic regions of the germline and in oocytes.

It localises to the cytoplasm. It is found in the perinuclear region. Its subcellular location is the cytoplasmic granule. Functionally, involved in gene silencing mediated by a class of 21 nucleotide PIWI-interacting RNAs (piRNAs) that possess a uracil residue at the 5'-end (also called 21U-RNAs) and that guide the Piwi protein prg-1 to its DNA targets for silencing. Not required for the biogenesis of 21U-RNAs. May also be involved in gene silencing mediated by 22G-siRNAs (a class of 22 nucleotide endogenous small interfering RNAs (siRNAs) that possess a triphosphorylated guanine residue at the 5'-end) and 26G-siRNAs (a class of 26 nucleotide siRNAs that possess a guanine residue at the 5'-end). Required for the biogenesis of secondary and tertiary 22G-siRNAs from many loci. Specifically, promotes the production of 22G-siRNAs from the 5' end of target mRNAs. May play a role in the production of 26G-siRNAs. Plays a role in small RNA-directed transgenerational epigenetic inheritance (also called RNAe) over several generations and germline immortality. Together with the argonaut protein hrde-1, promotes the silencing of the DNA transposable element Tc1. Required for the formation of liquid-like condensates in the cytoplasm called Z granules, playing a role in maintaining their assembly, viscosity and morphology in adult germ cells, and localization in early embryos. In Caenorhabditis elegans, this protein is Protein pid-2.